The primary structure comprises 312 residues: Ribonuclease HIII (312 aa).

The region spanning 95–311 (FNCIGSDEAG…REKAQKILKP (217 aa)) is the RNase H type-2 domain. Residues Asp101, Glu102, and Asp206 each contribute to the a divalent metal cation site.

Belongs to the RNase HII family. RnhC subfamily. Mn(2+) is required as a cofactor. Requires Mg(2+) as cofactor.

It is found in the cytoplasm. The enzyme catalyses Endonucleolytic cleavage to 5'-phosphomonoester.. Its function is as follows. Endonuclease that specifically degrades the RNA of RNA-DNA hybrids. In Staphylococcus aureus (strain Mu3 / ATCC 700698), this protein is Ribonuclease HIII.